The chain runs to 294 residues: MDSELVSYLAEQTAEPRLVIDEDEVQVYRPVGQGAKRRINSEESDVSEDGNSKPKRVRRSSVEIIFREIKKNNEKKLKDDFKASDYEELEDDDDDESIEEESDSEFEGESSSDEEESSYDSDSDYDSETEPEDSDDDFEAPVVKIPEDRQVLSAKRRCTRSLGVIVKTVEEVTHENRLKVNSMSVCDLPIDNMADLKVEHIKFYKRNTTFTEEELAEIEEDLLAEVKARYNNMKGDFRRSKTIETTEDDKKAGEVNKYDIDDDFIEKTESDEEEEITEDDSSEQETVVVEPVDE.

Disordered regions lie at residues 25–59 (VQVYRPVGQGAKRRINSEESDVSEDGNSKPKRVRR) and 77–141 (LKDD…FEAP). Residues 86 to 139 (YEELEDDDDDESIEEESDSEFEGESSSDEEESSYDSDSDYDSETEPEDSDDDFE) show a composition bias toward acidic residues. Residues 201–234 (IKFYKRNTTFTEEELAEIEEDLLAEVKARYNNMK) are a coiled coil. Over residues 242–259 (TIETTEDDKKAGEVNKYD) the composition is skewed to basic and acidic residues. A disordered region spans residues 242-294 (TIETTEDDKKAGEVNKYDIDDDFIEKTESDEEEEITEDDSSEQETVVVEPVDE). A compositionally biased stretch (acidic residues) spans 260 to 283 (IDDDFIEKTESDEEEEITEDDSSE).

This is an uncharacterized protein from Magallana gigas (Pacific oyster).